A 381-amino-acid chain; its full sequence is Succinyl-diaminopimelate desuccinylase (381 aa).

His-69 lines the Zn(2+) pocket. The active site involves Asp-71. Position 103 (Asp-103) interacts with Zn(2+). Glu-137 (proton acceptor) is an active-site residue. Zn(2+)-binding residues include Glu-138, Glu-166, and His-355.

The protein belongs to the peptidase M20A family. DapE subfamily. As to quaternary structure, homodimer. Requires Zn(2+) as cofactor. The cofactor is Co(2+).

The catalysed reaction is N-succinyl-(2S,6S)-2,6-diaminopimelate + H2O = (2S,6S)-2,6-diaminopimelate + succinate. It functions in the pathway amino-acid biosynthesis; L-lysine biosynthesis via DAP pathway; LL-2,6-diaminopimelate from (S)-tetrahydrodipicolinate (succinylase route): step 3/3. In terms of biological role, catalyzes the hydrolysis of N-succinyl-L,L-diaminopimelic acid (SDAP), forming succinate and LL-2,6-diaminopimelate (DAP), an intermediate involved in the bacterial biosynthesis of lysine and meso-diaminopimelic acid, an essential component of bacterial cell walls. The polypeptide is Succinyl-diaminopimelate desuccinylase (Rickettsia felis (strain ATCC VR-1525 / URRWXCal2) (Rickettsia azadi)).